The sequence spans 373 residues: Flagellar P-ring protein 1 (373 aa).

Residues 1-25 form the signal peptide; the sequence is MKPINTFFSSFLLALTLGLPATSQA.

It belongs to the FlgI family. In terms of assembly, the basal body constitutes a major portion of the flagellar organelle and consists of four rings (L,P,S, and M) mounted on a central rod.

It is found in the periplasm. The protein resides in the bacterial flagellum basal body. In terms of biological role, assembles around the rod to form the L-ring and probably protects the motor/basal body from shearing forces during rotation. The protein is Flagellar P-ring protein 1 of Vibrio parahaemolyticus serotype O3:K6 (strain RIMD 2210633).